Consider the following 233-residue polypeptide: MKIKAISIDIDGTITYPNRMIHEKALEAIRKAESLGIPVMLVTGNTVQFAEAASILIGTSGPVVAEDGGAISYRKKRIFLANMDEEWILWNEIRKRFPNARTSHTMPDRRAGLVIMRETIDVETVRKIIHELGLNLVAVDSGFAIHVKKPWINKGAGIEKACELLGIKPREVAHIGDGENDLDAFKVVGYRIAIAQAPDVLKENADYVTEKEYGEGGAEAIFHVLRVSGYMDF.

Catalysis depends on aspartate 9, which acts as the Nucleophile. Mg(2+) contacts are provided by aspartate 9 and aspartate 11. Lysine 154 serves as a coordination point for substrate. The Mg(2+) site is built by aspartate 177 and aspartate 181.

It belongs to the archaeal SPP-like hydrolase family. Mg(2+) serves as cofactor.

It carries out the reaction 2-phosphoglycolate + H2O = glycolate + phosphate. Catalyzes the dephosphorylation of 2-phosphoglycolate. The chain is Phosphoglycolate phosphatase from Pyrococcus abyssi (strain GE5 / Orsay).